The sequence spans 152 residues: MALTEKQEALLKQSWEVLKQNIPAHSLRLFALIIEAAPESKYVFSFLKDSNEIPENNPKLKAHAAVIFKTICESATELRQKGHAVWDNNTLKRLGSIHLKNKITDPHFEVMKGALLGTIKEAIKENWSDEMGQAWTEAYNQLVATIKAEMKE.

The Globin domain occupies 2–151; sequence ALTEKQEALL…LVATIKAEMK (150 aa). The short motif at 35 to 39 is the Homodimerization element; sequence EAAPE. Heme b contacts are provided by Ser45, Lys59, His63, Arg93, and His98. The Homodimerization motif lies at 105–117; sequence DPHFEVMKGALLG.

This sequence belongs to the plant globin family. In terms of assembly, homodimer. Heme b is required as a cofactor. As to expression, root nodules.

It localises to the cytoplasm. Its subcellular location is the nucleus. It catalyses the reaction Fe(III)-heme b-[protein] + nitric oxide + H2O = Fe(II)-heme b-[protein] + nitrite + 2 H(+). Phytoglobin that reduces nitrite to nitric oxide (NO) under anoxic conditions (e.g. during flooding or in waterlogged soil) and upon root nodulation. Required for general plant development and during nodulation, especially for the onset of symbiosis. Monitors nitric oxide (NO) levels during early phase of the nitrogen-fixing symbiosis and buffers oxygen in functioning nodules. May not function as an oxygen storage or transport protein. Has an unusually high affinity for O(2) through a hexacoordinate heme iron because of a very low dissociation constant. In Casuarina glauca (Swamp oak), this protein is Anaerobic nitrite reductase HBI.